The sequence spans 191 residues: Protein YceI (191 aa).

The signal sequence occupies residues 1–22; the sequence is MKKSLLGLTFASLMFSAGSAVA.

This sequence belongs to the UPF0312 family. Type 1 subfamily.

The protein resides in the periplasm. This is Protein YceI from Shigella flexneri.